Consider the following 385-residue polypeptide: Aliphatic amidase expression-regulating protein (385 aa).

In terms of assembly, homodimer. Forms a complex with AmiR.

Negatively regulates the expression of the aliphatic amidase operon. AmiC functions by inhibiting the action of AmiR at the protein level. It exhibits protein kinase activity. The sequence is that of Aliphatic amidase expression-regulating protein (amiC) from Pseudomonas aeruginosa (strain ATCC 15692 / DSM 22644 / CIP 104116 / JCM 14847 / LMG 12228 / 1C / PRS 101 / PAO1).